A 328-amino-acid polypeptide reads, in one-letter code: Ferredoxin--NADP reductase 1 (328 aa).

FAD-binding residues include Glu-37, Lys-45, Tyr-49, Val-89, and Thr-310.

The protein belongs to the ferredoxin--NADP reductase type 2 family. As to quaternary structure, homodimer. It depends on FAD as a cofactor.

The enzyme catalyses 2 reduced [2Fe-2S]-[ferredoxin] + NADP(+) + H(+) = 2 oxidized [2Fe-2S]-[ferredoxin] + NADPH. The sequence is that of Ferredoxin--NADP reductase 1 from Latilactobacillus sakei subsp. sakei (strain 23K) (Lactobacillus sakei subsp. sakei).